The following is a 427-amino-acid chain: MKLRTNAGPLQGTIQVPGDKSISHRAVILGAVAKGETRVKGLLKGEDVLSTIQAFRNLGVRIEEKDDQLVIEGQGFQGLTAPCQTLNMGNSGTSMRLIAGLLAGQPFSVKMIGDESLSKRPMDRIVYPLKQMGVEISGETDRQFPPLQLQGNHNLQPITYTLPISSAQVKSAILLAALQAKGTTQVVEKEITRNHTEEMIQQFGGRLIVDGKRITLVGPQQLTAQEITVPGDISSAAFWLVAGLIIPGSELLLKNVGVNPTRTGILEVVEKMGAQIVYEDMNKKEQVTSIRVVYSRLKGTIISGGLIPRLIDELPIIALLATQAQGTTCIKDAQELRVKETDRIQVVTDTLNSMGANIKATADGMIIKGPTVLYGANTSTYGDHRIGMMTAIAALLVKQGQVHLDKEEAIMTSYPTFFKDLERLCHD.

Positions 20, 21, and 25 each coordinate 3-phosphoshikimate. Residue Lys20 coordinates phosphoenolpyruvate. Gly92 and Arg120 together coordinate phosphoenolpyruvate. 3-phosphoshikimate contacts are provided by Ser166, Gln168, Asp312, and Lys339. A phosphoenolpyruvate-binding site is contributed by Gln168. Asp312 serves as the catalytic Proton acceptor. The phosphoenolpyruvate site is built by Arg343 and Arg385.

The protein belongs to the EPSP synthase family. As to quaternary structure, monomer.

Its subcellular location is the cytoplasm. It carries out the reaction 3-phosphoshikimate + phosphoenolpyruvate = 5-O-(1-carboxyvinyl)-3-phosphoshikimate + phosphate. The protein operates within metabolic intermediate biosynthesis; chorismate biosynthesis; chorismate from D-erythrose 4-phosphate and phosphoenolpyruvate: step 6/7. In terms of biological role, catalyzes the transfer of the enolpyruvyl moiety of phosphoenolpyruvate (PEP) to the 5-hydroxyl of shikimate-3-phosphate (S3P) to produce enolpyruvyl shikimate-3-phosphate and inorganic phosphate. The protein is 3-phosphoshikimate 1-carboxyvinyltransferase of Streptococcus pyogenes serotype M4 (strain MGAS10750).